The primary structure comprises 374 residues: MKYLLPSTAAGLLLLAAQPTMAANTGGYATTDGGNVAGAVNKTARSMQDIIDIIEEAKLDSKGKKVKGGAYPLIITYNGNEDALIKAAENNICGQWSKDARGVEIKEFTKGVTIIGTNGSSANFGIWLTKSSDVIIRNMRFGYMPGGAQDGDAIRIDNTPNVWIDHNEIFAKNFECQGTKDGDTTFESAIDIKKASTNVTVSYNYIHGIKKVGLSGFSSSDTGRDLTYHHNIYDDVNARLPLQRGGQVHAYNNLYTGITSSGLNVRQKGIALIERNWFENAKNPVTSRYDGSNFGTWELRNNNIMSPADFAKYNITWDKDTKAYVNAEDWKSTGTFASVPYSYSPVSPQCVKDKLANYAGVNKNLAVLTAANCN.

Positions 1-22 are cleaved as a signal peptide; that stretch reads MKYLLPSTAAGLLLLAAQPTMA. A disulfide bond links Cys93 and Cys176. Positions 150, 152, 187, and 191 each coordinate Ca(2+). Residue Arg239 is part of the active site. Cysteines 350 and 373 form a disulfide.

This sequence belongs to the polysaccharide lyase 1 family. PLADES subfamily. The cofactor is Ca(2+).

The protein localises to the secreted. It catalyses the reaction Eliminative cleavage of (1-&gt;4)-alpha-D-galacturonan to give oligosaccharides with 4-deoxy-alpha-D-galact-4-enuronosyl groups at their non-reducing ends.. It participates in glycan metabolism; pectin degradation; 2-dehydro-3-deoxy-D-gluconate from pectin: step 2/5. Functionally, involved in maceration and soft-rotting of plant tissue. In Pectobacterium atrosepticum (strain SCRI 1043 / ATCC BAA-672) (Erwinia carotovora subsp. atroseptica), this protein is Pectate lyase 3 (pel3).